Consider the following 189-residue polypeptide: Elongation factor P (189 aa).

Belongs to the elongation factor P family.

It localises to the cytoplasm. Its pathway is protein biosynthesis; polypeptide chain elongation. Its function is as follows. Involved in peptide bond synthesis. Stimulates efficient translation and peptide-bond synthesis on native or reconstituted 70S ribosomes in vitro. Probably functions indirectly by altering the affinity of the ribosome for aminoacyl-tRNA, thus increasing their reactivity as acceptors for peptidyl transferase. In Rhizobium radiobacter (Agrobacterium tumefaciens), this protein is Elongation factor P.